Reading from the N-terminus, the 78-residue chain is Small ribosomal subunit protein bS16c (78 aa).

The protein belongs to the bacterial ribosomal protein bS16 family.

Its subcellular location is the plastid. It is found in the chloroplast. The sequence is that of Small ribosomal subunit protein bS16c from Amborella trichopoda.